The sequence spans 302 residues: MTTEDTFETAERAAAIAKAAALIESLPWLKTFHDRIIVVKFGGNAMVSEELQRTFAEDMVYLRYAGLLPVIVHGGGPQISAMLDRLGIQSEFRGGYRVTTPEAMEVVRMVLTGQINRDIVAAINKHGPLAAGLSGEDAALFQGRKRGAVVDGEAVDLGLVGDVIGVNPEAVLAQIDAGRIPVVSSIAPDIDEPGQSLNVNADAAAAALAVALRAAKLVILTDVAGLYSDWPNRDSLLSKITARELRELLPGLESGMIPKMAACLAAVDGGVEKAEIIDGRIEHSILLEVFTQSGIGTEVAPV.

Substrate contacts are provided by residues 75–76, R97, and N198; that span reads GG.

Belongs to the acetylglutamate kinase family. ArgB subfamily.

Its subcellular location is the cytoplasm. The catalysed reaction is N-acetyl-L-glutamate + ATP = N-acetyl-L-glutamyl 5-phosphate + ADP. It functions in the pathway amino-acid biosynthesis; L-arginine biosynthesis; N(2)-acetyl-L-ornithine from L-glutamate: step 2/4. In terms of biological role, catalyzes the ATP-dependent phosphorylation of N-acetyl-L-glutamate. The protein is Acetylglutamate kinase of Leifsonia xyli subsp. xyli (strain CTCB07).